The chain runs to 230 residues: Uracil-DNA glycosylase (230 aa).

The active-site Proton acceptor is the D70.

The protein belongs to the uracil-DNA glycosylase (UDG) superfamily. UNG family.

Its subcellular location is the cytoplasm. It catalyses the reaction Hydrolyzes single-stranded DNA or mismatched double-stranded DNA and polynucleotides, releasing free uracil.. Functionally, excises uracil residues from the DNA which can arise as a result of misincorporation of dUMP residues by DNA polymerase or due to deamination of cytosine. The chain is Uracil-DNA glycosylase from Pseudomonas putida (strain GB-1).